The chain runs to 336 residues: Aspartate--ammonia ligase (336 aa).

Belongs to the class-II aminoacyl-tRNA synthetase family. AsnA subfamily.

Its subcellular location is the cytoplasm. The catalysed reaction is L-aspartate + NH4(+) + ATP = L-asparagine + AMP + diphosphate + H(+). It functions in the pathway amino-acid biosynthesis; L-asparagine biosynthesis; L-asparagine from L-aspartate (ammonia route): step 1/1. This chain is Aspartate--ammonia ligase, found in Limosilactobacillus fermentum (strain NBRC 3956 / LMG 18251) (Lactobacillus fermentum).